The sequence spans 222 residues: MINTKALRQEQIAKAQQVICYDDFSPPKLIAGADVGFERQGAITRAAIAVLSYPALELVEYQIARIETTLPYIPGLLSFREYPALMAAWQLLKYKPDLVMVDGHGIAHPRRLGVASHFGLLANVPTIGVAKRRLCGESELLGEQPGSCQPLLDKEEQIGWVWRSKKRCNPLYISTGHRISLDSALLWVERCMKGYRLPETTRWADGIASNRPFFEQMIQKNP.

Mg(2+)-binding residues include aspartate 34 and aspartate 102.

It belongs to the endonuclease V family. Requires Mg(2+) as cofactor.

It is found in the cytoplasm. It carries out the reaction Endonucleolytic cleavage at apurinic or apyrimidinic sites to products with a 5'-phosphate.. In terms of biological role, DNA repair enzyme involved in the repair of deaminated bases. Selectively cleaves double-stranded DNA at the second phosphodiester bond 3' to a deoxyinosine leaving behind the intact lesion on the nicked DNA. This is Endonuclease V from Photorhabdus laumondii subsp. laumondii (strain DSM 15139 / CIP 105565 / TT01) (Photorhabdus luminescens subsp. laumondii).